The chain runs to 303 residues: Oxygen-dependent coproporphyrinogen-III oxidase (303 aa).

Residue Ser-93 coordinates substrate. His-97 and His-107 together coordinate a divalent metal cation. Residue His-107 is the Proton donor of the active site. Residue 109 to 111 coordinates substrate; sequence NVR. Residues His-149 and His-179 each coordinate a divalent metal cation. The segment at 244–279 is important for dimerization; it reads YVEFNLVFDRGTLFGLQSGGRTESILLSMPPLAQWR. 262–264 contacts substrate; sequence GGR.

It belongs to the aerobic coproporphyrinogen-III oxidase family. As to quaternary structure, homodimer. Requires a divalent metal cation as cofactor.

Its subcellular location is the cytoplasm. The enzyme catalyses coproporphyrinogen III + O2 + 2 H(+) = protoporphyrinogen IX + 2 CO2 + 2 H2O. It participates in porphyrin-containing compound metabolism; protoporphyrin-IX biosynthesis; protoporphyrinogen-IX from coproporphyrinogen-III (O2 route): step 1/1. Functionally, involved in the heme biosynthesis. Catalyzes the aerobic oxidative decarboxylation of propionate groups of rings A and B of coproporphyrinogen-III to yield the vinyl groups in protoporphyrinogen-IX. This chain is Oxygen-dependent coproporphyrinogen-III oxidase, found in Bordetella parapertussis (strain 12822 / ATCC BAA-587 / NCTC 13253).